The sequence spans 178 residues: Inner membrane-spanning protein YciB (178 aa).

Transmembrane regions (helical) follow at residues 10-30, 47-67, 76-96, 121-141, and 151-171; these read IVLFFGSYKLYGIYVATAVLM, LQTMHKVTLALILSFGALTLA, WKPTVLYGAMSVALALTLWAL, WAWIAYCAFMSAINAYVVLHW, and LWGYVFPLVFLIGQGLYIAPH.

The protein belongs to the YciB family.

The protein localises to the cell inner membrane. Plays a role in cell envelope biogenesis, maintenance of cell envelope integrity and membrane homeostasis. This is Inner membrane-spanning protein YciB from Verminephrobacter eiseniae (strain EF01-2).